The following is a 214-amino-acid chain: Pyridoxine/pyridoxamine 5'-phosphate oxidase (214 aa).

Residues 8–11 (RINY) and Lys66 contribute to the substrate site. FMN is bound by residues 61-66 (RIVLIK), 76-77 (FT), Arg82, Lys83, and Gln105. Residues Tyr123, Arg127, and Ser131 each contribute to the substrate site. FMN-binding positions include 140–141 (QS) and Trp184. Position 190-192 (190-192 (RLH)) interacts with substrate. Residue Arg194 coordinates FMN.

This sequence belongs to the pyridoxamine 5'-phosphate oxidase family. Homodimer. It depends on FMN as a cofactor.

The enzyme catalyses pyridoxamine 5'-phosphate + O2 + H2O = pyridoxal 5'-phosphate + H2O2 + NH4(+). The catalysed reaction is pyridoxine 5'-phosphate + O2 = pyridoxal 5'-phosphate + H2O2. It functions in the pathway cofactor metabolism; pyridoxal 5'-phosphate salvage; pyridoxal 5'-phosphate from pyridoxamine 5'-phosphate: step 1/1. Its pathway is cofactor metabolism; pyridoxal 5'-phosphate salvage; pyridoxal 5'-phosphate from pyridoxine 5'-phosphate: step 1/1. Functionally, catalyzes the oxidation of either pyridoxine 5'-phosphate (PNP) or pyridoxamine 5'-phosphate (PMP) into pyridoxal 5'-phosphate (PLP). The protein is Pyridoxine/pyridoxamine 5'-phosphate oxidase of Burkholderia cenocepacia (strain HI2424).